The chain runs to 354 residues: Hyaluronan and proteoglycan link protein 1 (354 aa).

The propeptide occupies 1–9 (MRSLLFLVL). In terms of domain architecture, Ig-like V-type spans 38–152 (PRLLVEAEQA…EGLEDDTAVV (115 aa)). A glycan (N-linked (GlcNAc...) asparagine) is linked at Asn56. Intrachain disulfides connect Cys61-Cys139, Cys181-Cys252, Cys205-Cys226, Cys279-Cys349, and Cys304-Cys325. 2 Link domains span residues 159 to 254 (VVFP…FCFT) and 259 to 351 (GRFY…YCFR).

The protein belongs to the HAPLN family.

The protein localises to the secreted. Its subcellular location is the extracellular space. It localises to the extracellular matrix. Stabilizes the aggregates of proteoglycan monomers with hyaluronic acid in the extracellular cartilage matrix. The protein is Hyaluronan and proteoglycan link protein 1 (Hapln1) of Rattus norvegicus (Rat).